A 179-amino-acid chain; its full sequence is Large ribosomal subunit protein uL5 (179 aa).

This sequence belongs to the universal ribosomal protein uL5 family. As to quaternary structure, part of the 50S ribosomal subunit; part of the 5S rRNA/L5/L18/L25 subcomplex. Contacts the 5S rRNA and the P site tRNA. Forms a bridge to the 30S subunit in the 70S ribosome.

Functionally, this is one of the proteins that bind and probably mediate the attachment of the 5S RNA into the large ribosomal subunit, where it forms part of the central protuberance. In the 70S ribosome it contacts protein S13 of the 30S subunit (bridge B1b), connecting the 2 subunits; this bridge is implicated in subunit movement. Contacts the P site tRNA; the 5S rRNA and some of its associated proteins might help stabilize positioning of ribosome-bound tRNAs. The chain is Large ribosomal subunit protein uL5 from Prochlorococcus marinus (strain MIT 9313).